The chain runs to 117 residues: Large ribosomal subunit protein bL20 (117 aa).

It belongs to the bacterial ribosomal protein bL20 family.

Its function is as follows. Binds directly to 23S ribosomal RNA and is necessary for the in vitro assembly process of the 50S ribosomal subunit. It is not involved in the protein synthesizing functions of that subunit. This Roseiflexus castenholzii (strain DSM 13941 / HLO8) protein is Large ribosomal subunit protein bL20.